A 59-amino-acid chain; its full sequence is MDTRLLDILVCPLCKGPLEHDKKKQELICKVDKLAYPIRDGIPIMWADQARDLQTPAAG.

Belongs to the UPF0434 family.

This Herminiimonas arsenicoxydans protein is UPF0434 protein HEAR2489.